Consider the following 1562-residue polypeptide: NAC-alpha domain-containing protein 1 (1562 aa).

Positions 1–13 (MPGEAARAELLLP) are enriched in low complexity. Disordered stretches follow at residues 1-24 (MPGEAARAELLLPEADRPGPRTDL), 56-110 (FLPS…TEAP), 131-226 (SPRA…ADGD), 249-288 (SGWGLSPQGSMVDERELHPAGTPEPPSSESSLSADSSSSW), 327-365 (TPLSPEEEEEEAVADPDPGGDLAGEGEEDSTSASFLQSL), 381-458 (RDDT…GAYL), 503-941 (TPQA…EPLA), and 953-1423 (GCAP…AMSK). Over residues 195-208 (GDARDSEAELRDEL) the composition is skewed to basic and acidic residues. Over residues 275–287 (SSESSLSADSSSS) the composition is skewed to low complexity. Residues 331 to 340 (PEEEEEEAVA) show a composition bias toward acidic residues. Positions 385–397 (SAASSDSDSASYA) are enriched in low complexity. Polar residues-rich tracts occupy residues 449–458 (PQTSDRGAYL) and 550–564 (QEETSLTLCPDSPQN). Residues 992–1007 (PAALDQVQQDDPQPAA) are compositionally biased toward low complexity. The segment covering 1048-1074 (PGREACLEARAHTGDGAKPDSPQKETL) has biased composition (basic and acidic residues). The residue at position 1068 (serine 1068) is a Phosphoserine. Composition is skewed to low complexity over residues 1172–1182 (APTSAPTSQQP) and 1231–1241 (APGTLAGAALP). Positions 1254–1264 (PQEDSVEDEEP) are enriched in acidic residues. Composition is skewed to low complexity over residues 1265 to 1284 (PGSLGLPPPQAGVQPAAAAV), 1298 to 1308 (SLSPHSPLLSP), and 1335 to 1344 (QSPAGPQGLS). Over residues 1348 to 1357 (QQEDEDSLEE) the composition is skewed to acidic residues. Position 1354 is a phosphoserine (serine 1354). An NAC-A/B domain is found at 1411 to 1476 (SRSEKKARKA…AKIEDLSQQV (66 aa)).

Belongs to the NAC-alpha family.

The protein resides in the cytoplasm. It localises to the nucleus. Its function is as follows. May prevent inappropriate targeting of non-secretory polypeptides to the endoplasmic reticulum (ER). May bind to nascent polypeptide chains as they emerge from the ribosome and block their interaction with the signal recognition particle (SRP), which normally targets nascent secretory peptides to the ER. May also reduce the inherent affinity of ribosomes for protein translocation sites in the ER membrane (M sites). This is NAC-alpha domain-containing protein 1 (NACAD) from Homo sapiens (Human).